The primary structure comprises 303 residues: 2-(5''-triphosphoribosyl)-3'-dephosphocoenzyme-A synthase (303 aa).

Belongs to the CitG/MdcB family.

It catalyses the reaction 3'-dephospho-CoA + ATP = 2'-(5''-triphospho-alpha-D-ribosyl)-3'-dephospho-CoA + adenine. Catalyzes the formation of 2-(5''-triphosphoribosyl)-3'-dephosphocoenzyme-A, the precursor of the prosthetic group of the holo-acyl carrier protein (gamma chain) of citrate lyase, from ATP and dephospho-CoA. This chain is 2-(5''-triphosphoribosyl)-3'-dephosphocoenzyme-A synthase, found in Escherichia fergusonii (strain ATCC 35469 / DSM 13698 / CCUG 18766 / IAM 14443 / JCM 21226 / LMG 7866 / NBRC 102419 / NCTC 12128 / CDC 0568-73).